The following is a 454-amino-acid chain: Glycosyl hydrolase family 109 protein (454 aa).

The segment at residues 1 to 29 (MFAMKRREFIAASAAVAASSLLPQTPAWA) is a signal peptide (tat-type signal). Residues 43-44 (MR), Asp65, 116-119 (WEYH), 136-137 (EV), and Asn165 each bind NAD(+). Residue Tyr194 participates in substrate binding. Residue 224–228 (SEARW) coordinates NAD(+). Residues Arg229, 241 to 244 (YPSH), and Tyr324 each bind substrate. Tyr241 contributes to the NAD(+) binding site.

It belongs to the Gfo/Idh/MocA family. Glycosyl hydrolase 109 subfamily. NAD(+) serves as cofactor. Post-translationally, predicted to be exported by the Tat system. The position of the signal peptide cleavage has not been experimentally proven.

Its function is as follows. Glycosidase. The polypeptide is Glycosyl hydrolase family 109 protein (Stenotrophomonas maltophilia (strain K279a)).